The sequence spans 1368 residues: Kinesin-like protein KIF24 (1368 aa).

Residues 1–64 enclose the SAM domain; sequence MASWLYECLC…FQLIKIIKIM (64 aa). Residues 89–112 are disordered; the sequence is ELRSGPRRQLNFDSPADNKDRNAS. A phosphoserine mark is found at Ser102 and Ser112. The Kinesin motor domain occupies 223–546; it reads KIRVCVRKRP…LRYADRVKEL (324 aa). Residue 313-320 participates in ATP binding; sequence GQTGAGKT. Residue Ser478 is modified to Phosphoserine. The tract at residues 478–709 is interaction with MPHOSPH9; it reads SLLALKECIR…STKCKKVQTV (232 aa). Residues 557 to 576 are compositionally biased toward polar residues; the sequence is TSRNRTSGNSSPKRIQSSPG. Disordered stretches follow at residues 557–584 and 602–639; these read TSRN…DKCS and GSTR…SPSQ. Ser584 carries the post-translational modification Phosphoserine. Thr621 carries the phosphothreonine; by NEK2 modification. At Ser622 the chain carries Phosphoserine; by NEK2. Ser646 bears the Phosphoserine mark. Disordered regions lie at residues 651-670, 729-753, 792-849, 864-938, and 952-984; these read TVRS…PLCS, HRAE…WTNI, QYRP…NTLE, GPEK…LAEK, and RGGG…EEDG. Over residues 819-830 the composition is skewed to acidic residues; sequence QVEELDDSDFSE. A phosphoserine mark is found at Ser826 and Ser829. Polar residues-rich tracts occupy residues 839–849 and 871–881; these read QRATKQRNTLE and ERQQSLFSSPR. Residues 882 to 906 are compositionally biased toward basic and acidic residues; sequence TGDKKDLTKSWVDSRDPINHRRAAL. Ser1012 carries the phosphoserine modification. Disordered stretches follow at residues 1054–1073 and 1086–1148; these read MSLL…QLVQ and GGPV…SREA. Positions 1106–1119 are enriched in polar residues; that stretch reads SSATRHLWLSSSPP. The segment covering 1138–1148 has biased composition (basic and acidic residues); that stretch reads HPADKLPSREA.

The protein belongs to the TRAFAC class myosin-kinesin ATPase superfamily. Kinesin family. In terms of assembly, interacts with CCP110, CEP97, TALPID3. Interacts with MPHOSPH9.

The protein localises to the cytoplasm. It is found in the cytoskeleton. Its subcellular location is the microtubule organizing center. It localises to the centrosome. The protein resides in the centriole. Microtubule-dependent motor protein that acts as a negative regulator of ciliogenesis by mediating recruitment of CCP110 to mother centriole in cycling cells, leading to restrict nucleation of cilia at centrioles. Mediates depolymerization of microtubules of centriolar origin, possibly to suppress aberrant cilia formation. Following activation by NEK2 involved in disassembly of primary cilium during G2/M phase but does not disassemble fully formed ciliary axonemes. As cilium assembly and disassembly is proposed to coexist in a dynamic equilibrium may suppress nascent cilium assembly and, potentially, ciliar re-assembly in cells that have already disassembled their cilia ensuring the completion of cilium removal in the later stages of the cell cycle. Plays an important role in recruiting MPHOSPH9, a negative regulator of cilia formation to the distal end of mother centriole. The polypeptide is Kinesin-like protein KIF24 (KIF24) (Homo sapiens (Human)).